The sequence spans 518 residues: Glucose-6-phosphate 1-dehydrogenase (518 aa).

NADP(+) contacts are provided by residues 36-43 (GASGDLAK), R70, and K169. Residues K169, 199-203 (HYLGK), E237, and D256 each bind D-glucose 6-phosphate. The active-site Proton acceptor is the H261. An NADP(+)-binding site is contributed by R356. D-glucose 6-phosphate is bound by residues K359 and R364. NADP(+) is bound by residues K365, R369, and R392. D-glucose 6-phosphate is bound at residue Q394. Residues 400–402 (YFK), 420–422 (DLT), R486, Y502, and W508 each bind NADP(+).

This sequence belongs to the glucose-6-phosphate dehydrogenase family.

Its subcellular location is the cytoplasm. It is found in the cytosol. The catalysed reaction is D-glucose 6-phosphate + NADP(+) = 6-phospho-D-glucono-1,5-lactone + NADPH + H(+). It functions in the pathway carbohydrate degradation; pentose phosphate pathway; D-ribulose 5-phosphate from D-glucose 6-phosphate (oxidative stage): step 1/3. Functionally, cytosolic glucose-6-phosphate dehydrogenase that catalyzes the first and rate-limiting step of the oxidative branch within the pentose phosphate pathway/shunt, an alternative route to glycolysis for the dissimilation of carbohydrates and a major source of reducing power and metabolic intermediates for fatty acid and nucleic acid biosynthetic processes. This is Glucose-6-phosphate 1-dehydrogenase (Zw) from Drosophila yakuba (Fruit fly).